The sequence spans 86 residues: Large ribosomal subunit protein bL31B (86 aa).

The protein belongs to the bacterial ribosomal protein bL31 family. Type B subfamily. In terms of assembly, part of the 50S ribosomal subunit.

This is Large ribosomal subunit protein bL31B from Streptococcus equi subsp. equi (strain 4047).